A 279-amino-acid chain; its full sequence is Energy-coupling factor transporter ATP-binding protein EcfA (279 aa).

Positions 4–239 constitute an ABC transporter domain; sequence VETKDLYFRY…VETIRKANLR (236 aa). 37–44 is an ATP binding site; it reads GPNGAGKS.

The protein belongs to the ABC transporter superfamily. Energy-coupling factor EcfA family. In terms of assembly, forms a stable energy-coupling factor (ECF) transporter complex composed of 2 membrane-embedded substrate-binding proteins (S component), 2 ATP-binding proteins (A component) and 2 transmembrane proteins (T component).

Its subcellular location is the cell membrane. Its function is as follows. ATP-binding (A) component of a common energy-coupling factor (ECF) ABC-transporter complex. Unlike classic ABC transporters this ECF transporter provides the energy necessary to transport a number of different substrates. The chain is Energy-coupling factor transporter ATP-binding protein EcfA from Methanocaldococcus jannaschii (strain ATCC 43067 / DSM 2661 / JAL-1 / JCM 10045 / NBRC 100440) (Methanococcus jannaschii).